The primary structure comprises 695 residues: Putative ATP-dependent DNA helicase R568 (695 aa).

The 414-residue stretch at 86–499 folds into the UvrD-like helicase ATP-binding domain; the sequence is KFSEEQIKYI…FRNEEIFDSN (414 aa). 107–114 contributes to the ATP binding site; it reads ACAGSGKT.

Belongs to the helicase family. UvrD subfamily.

The enzyme catalyses Couples ATP hydrolysis with the unwinding of duplex DNA by translocating in the 3'-5' direction.. The catalysed reaction is ATP + H2O = ADP + phosphate + H(+). Its function is as follows. ATP-dependent DNA helicase. The sequence is that of Putative ATP-dependent DNA helicase R568 from Acanthamoeba polyphaga mimivirus (APMV).